Consider the following 227-residue polypeptide: Brain acid soluble protein 1 (227 aa).

The span at 1–11 (MGGKLSKKKKG) shows a compositional bias: basic residues. The interval 1–227 (MGGKLSKKKK…NSDQTVTVKE (227 aa)) is disordered. Glycine 2 carries the N-myristoyl glycine lipid modification. The span at 15–27 (NDEKAKEKDKKAE) shows a compositional bias: basic and acidic residues. A Glycyl lysine isopeptide (Lys-Gly) (interchain with G-Cter in SUMO2) cross-link involves residue lysine 25. 2 positions are modified to phosphothreonine: threonine 31 and threonine 36. Serine 40 carries the post-translational modification Phosphoserine. Residues 49–105 (AEAKEGKEKPDQDAEGKAEEKEGEKDAAAAKEEAPKAEPEKTEGAAEAKAEPPKAPE) are compositionally biased toward basic and acidic residues. Residues lysine 84 and lysine 97 each participate in a glycyl lysine isopeptide (Lys-Gly) (interchain with G-Cter in SUMO2) cross-link. The span at 106-139 (QEQAAPGPAAGGEAPKAAEAAAAPAESAAPAAGE) shows a compositional bias: low complexity. Residues 140 to 152 (EPSKEEGEPKKTE) are compositionally biased toward basic and acidic residues. A Glycyl lysine isopeptide (Lys-Gly) (interchain with G-Cter in SUMO2) cross-link involves residue lysine 163. 5 positions are modified to phosphoserine: serine 164, serine 170, serine 172, serine 176, and serine 195. Over residues 173–185 (KPGSSEAAPSSKE) the composition is skewed to polar residues. Threonine 196 is subject to Phosphothreonine. Serine 205 and serine 219 each carry phosphoserine. The span at 218 to 227 (NSDQTVTVKE) shows a compositional bias: polar residues.

In terms of tissue distribution, brain.

The protein localises to the cell membrane. Its subcellular location is the cell projection. The protein resides in the growth cone. In Homo sapiens (Human), this protein is Brain acid soluble protein 1 (BASP1).